Reading from the N-terminus, the 847-residue chain is Protein translocase subunit SecA (847 aa).

Residues Gln-87, 105–109, and Asp-495 each bind ATP; that span reads GEGKT. The tract at residues 828–847 is disordered; it reads SSNSPSDARNRPIEHDDNAV. Over residues 835 to 847 the composition is skewed to basic and acidic residues; the sequence is ARNRPIEHDDNAV.

It belongs to the SecA family. In terms of assembly, monomer and homodimer. Part of the essential Sec protein translocation apparatus which comprises SecA, SecYEG and auxiliary proteins SecDF. Other proteins may also be involved.

Its subcellular location is the cell membrane. It is found in the cytoplasm. It catalyses the reaction ATP + H2O + cellular proteinSide 1 = ADP + phosphate + cellular proteinSide 2.. In terms of biological role, part of the Sec protein translocase complex. Interacts with the SecYEG preprotein conducting channel. Has a central role in coupling the hydrolysis of ATP to the transfer of proteins into and across the cell membrane, serving as an ATP-driven molecular motor driving the stepwise translocation of polypeptide chains across the membrane. This Tropheryma whipplei (strain TW08/27) (Whipple's bacillus) protein is Protein translocase subunit SecA.